A 463-amino-acid polypeptide reads, in one-letter code: Argininosuccinate lyase (463 aa).

It belongs to the lyase 1 family. Argininosuccinate lyase subfamily.

The protein localises to the cytoplasm. The enzyme catalyses 2-(N(omega)-L-arginino)succinate = fumarate + L-arginine. It functions in the pathway amino-acid biosynthesis; L-arginine biosynthesis; L-arginine from L-ornithine and carbamoyl phosphate: step 3/3. This Chlorobaculum tepidum (strain ATCC 49652 / DSM 12025 / NBRC 103806 / TLS) (Chlorobium tepidum) protein is Argininosuccinate lyase.